A 525-amino-acid chain; its full sequence is GMP synthase [glutamine-hydrolyzing] (525 aa).

The 199-residue stretch at 9–207 (RILILDFGSQ…ILDICGCEAL (199 aa)) folds into the Glutamine amidotransferase type-1 domain. Cys86 (nucleophile) is an active-site residue. Active-site residues include His181 and Glu183. Residues 208 to 400 (WTPSKIAEDA…LGLPYDMVYR (193 aa)) enclose the GMPS ATP-PPase domain. ATP is bound at residue 235–241 (SGGVDSS).

In terms of assembly, homodimer.

The catalysed reaction is XMP + L-glutamine + ATP + H2O = GMP + L-glutamate + AMP + diphosphate + 2 H(+). Its pathway is purine metabolism; GMP biosynthesis; GMP from XMP (L-Gln route): step 1/1. Functionally, catalyzes the synthesis of GMP from XMP. This Pseudomonas fluorescens (strain ATCC BAA-477 / NRRL B-23932 / Pf-5) protein is GMP synthase [glutamine-hydrolyzing].